We begin with the raw amino-acid sequence, 3118 residues long: Laminin subunit alpha-2 (3118 aa).

A signal peptide spans 1–19; it reads MPAATAGILLLLLLGTLEG. A Laminin N-terminal domain is found at 31-282; that stretch reads QQRGLFPAVL…SVKDISVGGM (252 aa). 2 N-linked (GlcNAc...) asparagine glycosylation sites follow: Asn-51 and Asn-85. 6 cysteine pairs are disulfide-bonded: Cys-283-Cys-292, Cys-285-Cys-303, Cys-305-Cys-314, Cys-317-Cys-337, Cys-340-Cys-349, and Cys-342-Cys-374. Laminin EGF-like domains are found at residues 283-339, 340-409, 410-464, and 465-513; these read CICY…ECEA, CNCH…PCQP, CHCD…DCQP, and CNCS…GCEE. A glycan (N-linked (GlcNAc...) asparagine) is linked at Asn-299. 2 N-linked (GlcNAc...) asparagine glycosylation sites follow: Asn-359 and Asn-376. 10 disulfides stabilise this stretch: Cys-377/Cys-386, Cys-389/Cys-407, Cys-410/Cys-422, Cys-412/Cys-438, Cys-440/Cys-449, Cys-452/Cys-462, Cys-465/Cys-478, Cys-467/Cys-482, Cys-484/Cys-493, and Cys-496/Cys-511. N-linked (GlcNAc...) asparagine glycosylation occurs at Asn-466. The 10-residue stretch at 514 to 523 folds into the Laminin EGF-like 5; first part domain; sequence CFCSGVSNRC. The Laminin IV type A 1 domain maps to 527 to 719; sequence YWTYGNIQDM…DRRIATDVEV (193 aa). The 33-residue stretch at 720-752 folds into the Laminin EGF-like 5; second part domain; sequence CQCPPGYSGSSCETCWPRHRRVNGTIFGGICEP. N-linked (GlcNAc...) asparagine glycosylation occurs at Asn-742. Disulfide bonds link Cys-753-Cys-762, Cys-755-Cys-769, Cys-772-Cys-781, Cys-784-Cys-800, Cys-803-Cys-818, Cys-805-Cys-828, Cys-831-Cys-840, Cys-843-Cys-858, Cys-861-Cys-875, Cys-863-Cys-882, Cys-885-Cys-894, Cys-897-Cys-911, Cys-914-Cys-926, Cys-916-Cys-933, Cys-935-Cys-944, Cys-947-Cys-960, Cys-963-Cys-975, Cys-965-Cys-981, Cys-983-Cys-992, Cys-995-Cys-1007, Cys-1010-Cys-1019, Cys-1012-Cys-1026, Cys-1028-Cys-1037, Cys-1040-Cys-1053, Cys-1056-Cys-1068, Cys-1058-Cys-1075, Cys-1077-Cys-1086, Cys-1089-Cys-1099, Cys-1102-Cys-1114, Cys-1104-Cys-1130, Cys-1132-Cys-1141, and Cys-1144-Cys-1159. Laminin EGF-like domains follow at residues 753–802, 803–860, 861–913, 914–962, 963–1009, 1010–1055, 1056–1101, and 1102–1161; these read CQCF…DCQP, CACP…SCQP, CQCN…NCQP, CRCN…GCLP, CNCN…GCIA, CDCS…GCKV, CNCS…LCTL, and CDCF…GCSS. Asn-919 carries N-linked (GlcNAc...) asparagine glycosylation. N-linked (GlcNAc...) asparagine glycosylation occurs at Asn-1031. Asn-1057 carries an N-linked (GlcNAc...) asparagine glycan. In terms of domain architecture, Laminin EGF-like 14; first part spans 1162-1171; the sequence is CYCFGVTSQC. Residues 1172–1375 enclose the Laminin IV type A 2 domain; that stretch reads SEAKGLIRTW…GSPPAHLIER (204 aa). A Laminin EGF-like 14; second part domain is found at 1376-1415; it reads CDCPPGYSGLSCETCAPGFYRLRSEPGGRTPGPTLGTCVP. Intrachain disulfides connect Cys-1378/Cys-1387, Cys-1416/Cys-1425, Cys-1418/Cys-1432, Cys-1435/Cys-1444, Cys-1447/Cys-1462, Cys-1465/Cys-1480, Cys-1467/Cys-1490, Cys-1493/Cys-1502, Cys-1505/Cys-1520, Cys-1523/Cys-1535, Cys-1525/Cys-1542, Cys-1544/Cys-1553, and Cys-1556/Cys-1567. Laminin EGF-like domains are found at residues 1416–1464, 1465–1522, and 1523–1569; these read CQCN…DCQP, CACP…SCQE, and CECD…ECVF. The domain II and I stretch occupies residues 1570–2140; sequence CGDECTGLLL…NQARKQANSI (571 aa). Residues Asn-1593, Asn-1610, Asn-1696, Asn-1806, Asn-1897, Asn-1912, Asn-1916, Asn-2013, Asn-2024, Asn-2041, Asn-2122, and Asn-2236 are each glycosylated (N-linked (GlcNAc...) asparagine). A coiled-coil region spans residues 1662–1863; that stretch reads QDAERTNSRA…DIKTKLPPMS (202 aa). Residues 1923-2146 are a coiled coil; the sequence is AYSNIKDYID…ANSIKVSVSS (224 aa). 5 Laminin G-like domains span residues 2141 to 2324, 2336 to 2517, 2522 to 2706, 2759 to 2930, and 2929 to 3115; these read KVSV…CKGC, TIQF…TKGC, VYTV…IGRC, SKQF…VGTC, and TCFA…PVSC. Cys-2298 and Cys-2324 are disulfide-bonded. Asn-2356, Asn-2431, and Asn-2474 each carry an N-linked (GlcNAc...) asparagine glycan. Cys-2491 and Cys-2517 are oxidised to a cystine. N-linked (GlcNAc...) asparagine glycosylation is found at Asn-2547, Asn-2554, and Asn-2644. Cys-2679 and Cys-2706 are joined by a disulfide. An N-linked (GlcNAc...) asparagine glycan is attached at Asn-2889. 2 cysteine pairs are disulfide-bonded: Cys-2905/Cys-2930 and Cys-3083/Cys-3115.

Laminin is a complex glycoprotein, consisting of three different polypeptide chains (alpha, beta, gamma), which are bound to each other by disulfide bonds into a cross-shaped molecule comprising one long and three short arms with globules at each end. Alpha-2 is a subunit of laminin-2 (laminin-211 or merosin), laminin-4 (laminin-221 or S-merosin) and laminin-12 (laminin-213). Interacts with FBLN1, FBLN2 and NID2.

It localises to the secreted. The protein resides in the extracellular space. The protein localises to the extracellular matrix. Its subcellular location is the basement membrane. Binding to cells via a high affinity receptor, laminin is thought to mediate the attachment, migration and organization of cells into tissues during embryonic development by interacting with other extracellular matrix components. This chain is Laminin subunit alpha-2 (Lama2), found in Mus musculus (Mouse).